Consider the following 257-residue polypeptide: MDRIIEKLDHGWWVVSHEQKLWLPKGELPYGEAANFDLVGQRALQIGEWQGEPVWLVQQQRRHDMGSVRQVIDLDVGLFQLAGRGVQLAEFYRSHKYCGYCGHEMYPSKTEWAMLCSHCRERYYPQIAPCIIVAIRRDDSILLAQHTRHRNGVHTVLAGFVEVGETLEQAVAREVMEESGIKVKNLRYVTSQPWPFPQSLMTAFMAEYDSGDIVIDPKELLEANWYRYDDLPLLPPPGTVARRLIEDTVAMCRAEYE.

2 residues coordinate substrate: Lys-25 and Arg-69. The Zn(2+) site is built by Cys-98 and Cys-101. Glu-111 serves as a coordination point for substrate. Zn(2+) is bound by residues Cys-116 and Cys-119. Tyr-124 provides a ligand contact to substrate. Residues 125–248 (PQIAPCIIVA…TVARRLIEDT (124 aa)) form the Nudix hydrolase domain. Residues Ala-158, Glu-174, and Glu-178 each coordinate a divalent metal cation. A Nudix box motif is present at residues 159 to 180 (GFVEVGETLEQAVAREVMEESG). A substrate-binding site is contributed by 192–199 (QPWPFPQS). Glu-219 provides a ligand contact to a divalent metal cation. Ala-241 contacts substrate.

The protein belongs to the Nudix hydrolase family. NudC subfamily. As to quaternary structure, homodimer. It depends on Mg(2+) as a cofactor. Mn(2+) serves as cofactor. Requires Zn(2+) as cofactor.

It catalyses the reaction a 5'-end NAD(+)-phospho-ribonucleoside in mRNA + H2O = a 5'-end phospho-adenosine-phospho-ribonucleoside in mRNA + beta-nicotinamide D-ribonucleotide + 2 H(+). The enzyme catalyses NAD(+) + H2O = beta-nicotinamide D-ribonucleotide + AMP + 2 H(+). It carries out the reaction NADH + H2O = reduced beta-nicotinamide D-ribonucleotide + AMP + 2 H(+). Functionally, mRNA decapping enzyme that specifically removes the nicotinamide adenine dinucleotide (NAD) cap from a subset of mRNAs by hydrolyzing the diphosphate linkage to produce nicotinamide mononucleotide (NMN) and 5' monophosphate mRNA. The NAD-cap is present at the 5'-end of some mRNAs and stabilizes RNA against 5'-processing. Has preference for mRNAs with a 5'-end purine. Catalyzes the hydrolysis of a broad range of dinucleotide pyrophosphates. The chain is NAD-capped RNA hydrolase NudC from Escherichia coli (strain 55989 / EAEC).